The primary structure comprises 101 residues: Small ribosomal subunit protein uS14 (101 aa).

It belongs to the universal ribosomal protein uS14 family. As to quaternary structure, part of the 30S ribosomal subunit. Contacts proteins S3 and S10.

Its function is as follows. Binds 16S rRNA, required for the assembly of 30S particles and may also be responsible for determining the conformation of the 16S rRNA at the A site. The chain is Small ribosomal subunit protein uS14 from Bordetella petrii (strain ATCC BAA-461 / DSM 12804 / CCUG 43448).